We begin with the raw amino-acid sequence, 691 residues long: MPRTHAIEDYRNFGIMAHIDAGKTTTTERILYYTGKSHKIGEVHEGAATMDWMAQEQERGITITSAATTCFWRDKRLNIIDTPGHVDFTIEVERSLRVLDGAVCVLDGNQGVEPQTETVWRQADKYDVPRVVFVNKMDKIGADFFKCVADIIDRVAGKPVCLQLPIGAESSFQGVIDLIKMKAIVWSGEALGANFDETEIPADLKDQAVEYRTKLVEACVELDDDAMSAYLDGNEPDEATMRTLVRKAVQLRAFHPVLCGSAFKNKGVQPLLDAVVDYLPSPADRGEIKGIDFKTEEETVRHPSDSDPFSMLAFKIMDDPHVGTITFCRVYSGKVETGANVLNSSRDKKERVGRMLLMHANNREDIKEAFAGDIVALAGLKDTRTGDTLCDPQKAVILEKMEFPEPVIEIAVEPKSKADQEKLGIALSKLAAEDPSFRVSTDQESGQTILKGMGELHLDIKVDILRRTYKVDANIGQPQVAYREKLTRRQEIDYTHKKQTGGTGQFARVKFVVEPNEPGAGFSFESKIVGGAVPKEYIPGVEKGLNSVLGAGVLAGFPVVDVKVELVDGAYHDVDSSALAFEIASRAAFREALQKGGSVLLEPVMKVEVVSPEEYTGSVIGDLNARRGQIQGQDMRGNANVINAMVPLANMFGYVNQLRSFSQGRANFTMQFDHYEEVPRGEADKVIAKYA.

One can recognise a tr-type G domain in the interval 8–283 (EDYRNFGIMA…AVVDYLPSPA (276 aa)). GTP is bound by residues 17 to 24 (AHIDAGKT), 81 to 85 (DTPGH), and 135 to 138 (NKMD).

Belongs to the TRAFAC class translation factor GTPase superfamily. Classic translation factor GTPase family. EF-G/EF-2 subfamily.

It is found in the cytoplasm. Functionally, catalyzes the GTP-dependent ribosomal translocation step during translation elongation. During this step, the ribosome changes from the pre-translocational (PRE) to the post-translocational (POST) state as the newly formed A-site-bound peptidyl-tRNA and P-site-bound deacylated tRNA move to the P and E sites, respectively. Catalyzes the coordinated movement of the two tRNA molecules, the mRNA and conformational changes in the ribosome. The polypeptide is Elongation factor G (Methylobacterium radiotolerans (strain ATCC 27329 / DSM 1819 / JCM 2831 / NBRC 15690 / NCIMB 10815 / 0-1)).